A 455-amino-acid chain; its full sequence is GTPase Der (455 aa).

2 EngA-type G domains span residues 4–169 (PVVA…PPKD) and 178–353 (IQMA…EQHR). Residues 10–17 (GRPNVGKS), 57–61 (DTGGL), 120–123 (NKCE), 184–191 (GRPNVGKS), 231–235 (DTAGI), and 296–299 (NKWD) each bind GTP. Residues 354–439 (RRVSTSVVNE…PLRLFWRGKQ (86 aa)) form the KH-like domain.

Belongs to the TRAFAC class TrmE-Era-EngA-EngB-Septin-like GTPase superfamily. EngA (Der) GTPase family. In terms of assembly, associates with the 50S ribosomal subunit.

GTPase that plays an essential role in the late steps of ribosome biogenesis. The chain is GTPase Der from Synechococcus sp. (strain CC9605).